Consider the following 283-residue polypeptide: S-methyl-5'-thioadenosine phosphorylase (283 aa).

Thr18 serves as a coordination point for phosphate. Residue Lys51 is modified to N6-acetyllysine. Phosphate-binding positions include 60 to 61 (RH) and 93 to 94 (TA). Position 196 (Met196) interacts with substrate. Thr197 serves as a coordination point for phosphate. A substrate-binding site is contributed by 220 to 222 (DYD).

The protein belongs to the PNP/MTAP phosphorylase family. MTAP subfamily. As to quaternary structure, homotrimer. Ubiquitously expressed.

It localises to the cytoplasm. It is found in the nucleus. The catalysed reaction is S-methyl-5'-thioadenosine + phosphate = 5-(methylsulfanyl)-alpha-D-ribose 1-phosphate + adenine. The protein operates within amino-acid biosynthesis; L-methionine biosynthesis via salvage pathway; S-methyl-5-thio-alpha-D-ribose 1-phosphate from S-methyl-5'-thioadenosine (phosphorylase route): step 1/1. Its activity is regulated as follows. Inhibited by 5'-methylthiotubercin and 5'-chloroformycin. Catalyzes the reversible phosphorylation of S-methyl-5'-thioadenosine (MTA) to adenine and 5-methylthioribose-1-phosphate. Involved in the breakdown of MTA, a major by-product of polyamine biosynthesis. Responsible for the first step in the methionine salvage pathway after MTA has been generated from S-adenosylmethionine. Has broad substrate specificity with 6-aminopurine nucleosides as preferred substrates. This chain is S-methyl-5'-thioadenosine phosphorylase, found in Homo sapiens (Human).